The sequence spans 423 residues: tRNA(Met) cytidine acetate ligase (423 aa).

ATP-binding positions include 7–20 (VVEY…HLYH), glycine 102, asparagine 165, and arginine 190.

The protein belongs to the TmcAL family.

It is found in the cytoplasm. It carries out the reaction cytidine(34) in elongator tRNA(Met) + acetate + ATP = N(4)-acetylcytidine(34) in elongator tRNA(Met) + AMP + diphosphate. Functionally, catalyzes the formation of N(4)-acetylcytidine (ac(4)C) at the wobble position of elongator tRNA(Met), using acetate and ATP as substrates. First activates an acetate ion to form acetyladenylate (Ac-AMP) and then transfers the acetyl group to tRNA to form ac(4)C34. The protein is tRNA(Met) cytidine acetate ligase of Thermosipho africanus (strain TCF52B).